We begin with the raw amino-acid sequence, 70 residues long: MRAIISLLLISAMVFYIIAAVPEEEGLQLSEDERGGCLPHNRFCNALSGPRCCSGLRCKELSIRDSRCLG.

Positions 1 to 20 (MRAIISLLLISAMVFYIIAA) are cleaved as a signal peptide. Residues 21 to 34 (VPEEEGLQLSEDER) constitute a propeptide that is removed on maturation. Cystine bridges form between Cys-37-Cys-53, Cys-44-Cys-58, and Cys-52-Cys-68. Residue Leu-69 is modified to Leucine amide.

It belongs to the neurotoxin 01 (U2-agtx) family. Expressed by the venom gland.

It is found in the secreted. In terms of biological role, insect active toxin causing rapid but reversible paralysis in crickets. No activity shown in mammals. Does not show effect on mammalian voltage-gated calcium channels. The chain is U2-agatoxin-Ao1n from Agelena orientalis (Funnel-web spider).